Reading from the N-terminus, the 811-residue chain is Protein kinase C-binding protein NELL2a (811 aa).

Residues 1 to 18 (MAFLQLFVGLLCGAAVSA) form the signal peptide. Positions 54–225 (AFMFQGSSRS…TQCPDLNRTC (172 aa)) constitute a Laminin G-like domain. 3 N-linked (GlcNAc...) asparagine glycosylation sites follow: Asn222, Asn290, and Asn295. The region spanning 269–328 (RTCRVKDQIYREEQSWTDGCKNCTCSNGTVRCEKILCPPLDCPDGTTPAYVTGTCCKECQ) is the VWFC 1 domain. The 43-residue stretch at 395–437 (GHDFCAEENICSENSDCVNLDAGASCGCKNGFRPLRLDSAYCE) folds into the EGF-like 1 domain. Cystine bridges form between Cys399–Cys411, Cys405–Cys420, and Cys422–Cys436. Ca(2+) contacts are provided by Asp438, Ile439, and Glu441. One can recognise an EGF-like 2; calcium-binding domain in the interval 438-479 (DIDECAEGRHYCRENTECVNTAGSFMCVCHTGFIRIDDYSCT). Intrachain disulfides connect Cys442–Cys455, Cys449–Cys464, Cys466–Cys478, Cys484–Cys497, Cys491–Cys506, Cys508–Cys519, Cys523–Cys533, Cys527–Cys539, and Cys541–Cys550. Asn457, Thr458, and Ser461 together coordinate Ca(2+). Residues 480-520 (EHDECASGQHDCDENALCFNTVGGHSCSCKPGYSGNGTVCR) form the EGF-like 3; calcium-binding domain. Asn515 is a glycosylation site (N-linked (GlcNAc...) asparagine). Residues 521 to 551 (ALCDGRCLNGGSCASPNVCVCVQGFSGQNCE) form the EGF-like 4 domain. The Ca(2+) site is built by Asp553, Ile554, and Glu556. The EGF-like 5; calcium-binding domain occupies 553–592 (DIDECSEGLVQCAAHATCVNLPGWYHCECRDGYHDNEVFS). 3 disulfides stabilise this stretch: Cys557–Cys570, Cys564–Cys579, and Cys581–Cys598. Residues Asn572, Leu573, and Trp576 each contribute to the Ca(2+) site. Ca(2+) contacts are provided by Asp600, Ile601, and Glu603. The EGF-like 6; calcium-binding domain maps to 600 to 635 (DIDECRTGRSTCANDTVCFNLDGGFDCRCPHGHNCS). Intrachain disulfides connect Cys604-Cys617, Cys611-Cys626, and Cys628-Cys634. A glycan (N-linked (GlcNAc...) asparagine) is linked at Asn613. Ca(2+)-binding residues include Asn619, Leu620, and Gly623. Asn633 is a glycosylation site (N-linked (GlcNAc...) asparagine). 2 consecutive VWFC domains span residues 636 to 691 (GDCI…PECD) and 696 to 754 (SQCL…PRCV).

As to quaternary structure, homotrimer.

Its subcellular location is the secreted. May regulate neuronal differentiation, polarization and axon guidance. The chain is Protein kinase C-binding protein NELL2a (nell2a) from Danio rerio (Zebrafish).